The sequence spans 52 residues: Lantibiotic gallidermin (52 aa).

The propeptide occupies 1 to 30 (MEAVKEKNELFDLDVKVNAKESNDSGAEPR). Residues 33–37 (SKFLC) constitute a cross-link (lanthionine (Ser-Cys)). A cross-link (beta-methyllanthionine (Thr-Cys)) is located at residues 38 to 41 (TPGC). T44 is modified ((Z)-2,3-didehydrobutyrine). Positions 46-51 (SFNSYC) form a cross-link, lanthionine (Ser-Cys). The segment at residues 49-52 (SYCC) is a cross-link (S-(2-aminovinyl)-D-cysteine (Ser-Cys)).

The protein belongs to the type A lantibiotic family. Maturation of lantibiotics involves the enzymatic conversion of Thr, and Ser into dehydrated AA and the formation of thioether bonds with cysteine. The C-terminal lanthionine undergoes decarboxylation. This is followed by membrane translocation and cleavage of the modified precursor. In terms of processing, the structure of the 2,3-didehydrobutyrine is not discussed in PubMed:1932575. However, in Fig. 5 the NMR model appears to have the Z-isomer.

In terms of biological role, lanthionine-containing peptide antibiotic (lantibiotic) active on Gram-positive bacteria. The bactericidal activity of lantibiotics is based on depolarization of energized bacterial cytoplasmic membranes, initiated by the formation of aqueous transmembrane pores. This chain is Lantibiotic gallidermin (gdmA), found in Staphylococcus gallinarum.